Reading from the N-terminus, the 397-residue chain is Serpin-Z7 (397 aa).

An N-acetylalanine modification is found at alanine 2. The segment at 344-368 (GTKAGAATGDVIVDRSLPIRMDFVA) is RCL.

It belongs to the serpin family. Highly expressed in endosperm, at intermediate level in embryo and at lower levels in roots.

Inhibits chymotrypsin in vitro. This chain is Serpin-Z7 (PAZ7), found in Hordeum vulgare (Barley).